The sequence spans 275 residues: Diaminopimelate epimerase (275 aa).

Substrate is bound by residues Asn12, Gln45, and Asn65. Cys74 acts as the Proton donor in catalysis. Residues 75–76, Asn158, Asn191, and 209–210 contribute to the substrate site; these read GN and ER. The active-site Proton acceptor is the Cys218. 219–220 serves as a coordination point for substrate; sequence GS.

Belongs to the diaminopimelate epimerase family. In terms of assembly, homodimer.

The protein localises to the cytoplasm. It carries out the reaction (2S,6S)-2,6-diaminopimelate = meso-2,6-diaminopimelate. It functions in the pathway amino-acid biosynthesis; L-lysine biosynthesis via DAP pathway; DL-2,6-diaminopimelate from LL-2,6-diaminopimelate: step 1/1. Functionally, catalyzes the stereoinversion of LL-2,6-diaminopimelate (L,L-DAP) to meso-diaminopimelate (meso-DAP), a precursor of L-lysine and an essential component of the bacterial peptidoglycan. This Shewanella amazonensis (strain ATCC BAA-1098 / SB2B) protein is Diaminopimelate epimerase.